The chain runs to 279 residues: Dehydrogenase/reductase SDR family member 4 (279 aa).

NADP(+) is bound at residue 37–61; the sequence is LVTASTDGIGLAIARRLAQDGAHVV. The residue at position 93 (lysine 93) is an N6-acetyllysine; alternate. N6-succinyllysine; alternate is present on lysine 93. Residue serine 170 participates in substrate binding. Residue tyrosine 183 is the Proton acceptor of the active site. Lysine 187 provides a ligand contact to NADP(+). Lysine 217 carries the N6-acetyllysine; alternate modification. The residue at position 217 (lysine 217) is an N6-succinyllysine; alternate. Serine 221 carries the post-translational modification Phosphoserine. 2 positions are modified to N6-succinyllysine: lysine 228 and lysine 235. The short motif at 277–279 is the Peroxisomal targeting signal element; the sequence is SRL.

It belongs to the short-chain dehydrogenases/reductases (SDR) family. In terms of assembly, homotetramer. As to expression, detected in heart, kidney, liver and small intestine. Detected at lower levels in brain, lung, stomach and spleen.

Its subcellular location is the peroxisome. It catalyses the reaction a secondary alcohol + NADP(+) = a ketone + NADPH + H(+). The enzyme catalyses 3alpha-hydroxy-5beta-pregnan-20-one + NADP(+) = 5beta-pregnan-3,20-dione + NADPH + H(+). It carries out the reaction 5beta-dihydrotestosterone + NADPH + H(+) = 5beta-androstane-3alpha,17beta-diol + NADP(+). The catalysed reaction is all-trans-retinol + NADP(+) = all-trans-retinal + NADPH + H(+). It catalyses the reaction isatin + NADPH + H(+) = 3-hydroxyindolin-2-one + NADP(+). Its activity is regulated as follows. Inhibited by kaempferol, quercetin, genistein and myristic acid. In terms of biological role, NADPH-dependent oxidoreductase which catalyzes the reduction of a variety of compounds bearing carbonyl groups including ketosteroids, alpha-dicarbonyl compounds, aldehydes, aromatic ketones and quinones. Reduces all-trans-retinal and 9-cis retinal. Reduces 3-ketosteroids and benzil into 3alpha-hydroxysteroids and S-benzoin, respectively, in contrast to the stereoselectivity of primates DHRS4s which produce 3beta-hydroxysteroids and R-benzoin. In the reverse reaction, catalyzes the NADP-dependent oxidation of 3alpha-hydroxysteroids and alcohol, but with much lower efficiency. Involved in the metabolism of 3alpha-hydroxysteroids, retinoid, isatin and xenobiotic carbonyl compounds. The protein is Dehydrogenase/reductase SDR family member 4 (DHRS4) of Sus scrofa (Pig).